The following is a 144-amino-acid chain: Oleosin H2 (144 aa).

A2 carries the post-translational modification N-acetylalanine. Helical transmembrane passes span 28-48, 53-73, and 75-95; these read VLAV…AGLI, IIGL…LVPA, and LTIA…ITAL. The Proline-knot signature appears at 61-72; that stretch reads PLFVIFSPILVP. The segment at 124-144 is disordered; that stretch reads QETVGQKTREAGQRSQDVIRP.

Belongs to the oleosin family. In terms of tissue distribution, expressed in seeds (at protein level).

Its subcellular location is the lipid droplet. It localises to the membrane. May have a structural role to stabilize the lipid body during desiccation of the seed by preventing coalescence of the oil. Probably interacts with both lipid and phospholipid moieties of lipid bodies. May also provide recognition signals for specific lipase anchorage in lipolysis during seedling growth. This is Oleosin H2 from Sesamum indicum (Oriental sesame).